Here is a 116-residue protein sequence, read N- to C-terminus: MNLVISILAITIILSSILAVVSFWLPQMNPDAEKLSPYECGFDPLGSARLPFSIRFFLVAILFLLFDLEIALLLALPWGDQLYSATGTFFWATAVLILLTLGLIYEWTQGGLEWAE.

3 helical membrane passes run 3–23, 56–76, and 85–105; these read LVIS…VVSF, FFLV…LLAL, and ATGT…GLIY.

It belongs to the complex I subunit 3 family.

It localises to the mitochondrion membrane. The catalysed reaction is a ubiquinone + NADH + 5 H(+)(in) = a ubiquinol + NAD(+) + 4 H(+)(out). In terms of biological role, core subunit of the mitochondrial membrane respiratory chain NADH dehydrogenase (Complex I) that is believed to belong to the minimal assembly required for catalysis. Complex I functions in the transfer of electrons from NADH to the respiratory chain. The immediate electron acceptor for the enzyme is believed to be ubiquinone. The sequence is that of NADH-ubiquinone oxidoreductase chain 3 (MT-ND3) from Formosania lacustris (Oriental stream loach).